Reading from the N-terminus, the 541-residue chain is Chaperonin GroEL (541 aa).

Residues 29–32 (TLGP), 86–90 (DGTTT), glycine 413, 477–479 (DAL), and aspartate 493 each bind ATP.

Belongs to the chaperonin (HSP60) family. Forms a cylinder of 14 subunits composed of two heptameric rings stacked back-to-back. Interacts with the co-chaperonin GroES.

It is found in the cytoplasm. It catalyses the reaction ATP + H2O + a folded polypeptide = ADP + phosphate + an unfolded polypeptide.. Its function is as follows. Together with its co-chaperonin GroES, plays an essential role in assisting protein folding. The GroEL-GroES system forms a nano-cage that allows encapsulation of the non-native substrate proteins and provides a physical environment optimized to promote and accelerate protein folding. This is Chaperonin GroEL from Clostridium beijerinckii (strain ATCC 51743 / NCIMB 8052) (Clostridium acetobutylicum).